A 398-amino-acid chain; its full sequence is Lysophospholipid transporter LplT (398 aa).

Transmembrane regions (helical) follow at residues 19–39 (VIAAQFLSAFGDNALLFATLA), 53–73 (ILQMVFVGAYILFAPFVGQVA), 91–111 (LGAASICFGFNPFVGYTLVGI), 139–159 (LMEASTIAAILLGSVAGGVLA), 164–184 (IAALVACALAYAGAVVANLFI), 227–247 (LFWGAGVTLRFLLVLWVPVAL), 257–277 (YLNAMVAIGIVVGAGAAAKLV), 281–301 (TVARCMPAGILIGVVVLIFSL), 304–324 (ALLPAYALLTLIGVLGGFFVV), 350–370 (GENSAMLLMLGLYSLAVLVGI), and 372–392 (VVAIGIGFGGLFALAIAALWI).

The protein belongs to the major facilitator superfamily. LplT (TC 2.A.1.42) family.

The protein resides in the cell inner membrane. Catalyzes the facilitated diffusion of 2-acyl-glycero-3-phosphoethanolamine (2-acyl-GPE) into the cell. This Citrobacter koseri (strain ATCC BAA-895 / CDC 4225-83 / SGSC4696) protein is Lysophospholipid transporter LplT.